The chain runs to 278 residues: Formyltetrahydrofolate deformylase (278 aa).

Positions 6–85 (ILLTDCPDDK…RLIGTQRKRI (80 aa)) constitute an ACT domain. D223 is an active-site residue.

The protein belongs to the PurU family.

It catalyses the reaction (6R)-10-formyltetrahydrofolate + H2O = (6S)-5,6,7,8-tetrahydrofolate + formate + H(+). The protein operates within purine metabolism; IMP biosynthesis via de novo pathway; formate from 10-formyl-5,6,7,8-tetrahydrofolate: step 1/1. Its function is as follows. Catalyzes the hydrolysis of 10-formyltetrahydrofolate (formyl-FH4) to formate and tetrahydrofolate (FH4). This Haemophilus influenzae (strain ATCC 51907 / DSM 11121 / KW20 / Rd) protein is Formyltetrahydrofolate deformylase.